Consider the following 400-residue polypeptide: Enoyl-[acyl-carrier-protein] reductase [NADH] (400 aa).

NAD(+) is bound by residues 48–53, 74–75, 111–112, and 139–140; these read GSSSGY, FE, DA, and LA. Substrate is bound at residue Y225. Y235 functions as the Proton donor in the catalytic mechanism. NAD(+)-binding positions include K244 and 273 to 275; that span reads VVT.

Belongs to the TER reductase family. Monomer.

It carries out the reaction a 2,3-saturated acyl-[ACP] + NAD(+) = a (2E)-enoyl-[ACP] + NADH + H(+). It participates in lipid metabolism; fatty acid biosynthesis. In terms of biological role, involved in the final reduction of the elongation cycle of fatty acid synthesis (FAS II). Catalyzes the reduction of a carbon-carbon double bond in an enoyl moiety that is covalently linked to an acyl carrier protein (ACP). This Shewanella baltica (strain OS223) protein is Enoyl-[acyl-carrier-protein] reductase [NADH].